A 666-amino-acid polypeptide reads, in one-letter code: UvrABC system protein B (666 aa).

Residues 28 to 171 (NNINQGIQRQ…YLHVGELIEF (144 aa)) form the Helicase ATP-binding domain. 41–48 (GATGTGKT) provides a ligand contact to ATP. The Beta-hairpin signature appears at 94–117 (YFDYYQPEAYKPITDTYIEKDSVT). The region spanning 436–598 (QIDDLINELM…IIPKTIIKPI (163 aa)) is the Helicase C-terminal domain. The region spanning 624-659 (NQKIKELKKKMEEAAKKREYEVAAQYRDMIVELEAI) is the UVR domain.

This sequence belongs to the UvrB family. Forms a heterotetramer with UvrA during the search for lesions. Interacts with UvrC in an incision complex.

It is found in the cytoplasm. In terms of biological role, the UvrABC repair system catalyzes the recognition and processing of DNA lesions. A damage recognition complex composed of 2 UvrA and 2 UvrB subunits scans DNA for abnormalities. Upon binding of the UvrA(2)B(2) complex to a putative damaged site, the DNA wraps around one UvrB monomer. DNA wrap is dependent on ATP binding by UvrB and probably causes local melting of the DNA helix, facilitating insertion of UvrB beta-hairpin between the DNA strands. Then UvrB probes one DNA strand for the presence of a lesion. If a lesion is found the UvrA subunits dissociate and the UvrB-DNA preincision complex is formed. This complex is subsequently bound by UvrC and the second UvrB is released. If no lesion is found, the DNA wraps around the other UvrB subunit that will check the other stand for damage. The protein is UvrABC system protein B of Ureaplasma parvum serovar 3 (strain ATCC 27815 / 27 / NCTC 11736).